A 483-amino-acid chain; its full sequence is Phosphomethylpyrimidine synthase (483 aa).

Substrate-binding positions include N97, M126, Y156, H192, 212 to 214, 253 to 256, and E292; these read SRG and DSLR. H296 contributes to the Zn(2+) binding site. Y319 is a substrate binding site. H360 is a binding site for Zn(2+). [4Fe-4S] cluster contacts are provided by C440, C443, and C448.

The protein belongs to the ThiC family. It depends on [4Fe-4S] cluster as a cofactor.

The enzyme catalyses 5-amino-1-(5-phospho-beta-D-ribosyl)imidazole + S-adenosyl-L-methionine = 4-amino-2-methyl-5-(phosphooxymethyl)pyrimidine + CO + 5'-deoxyadenosine + formate + L-methionine + 3 H(+). Its pathway is cofactor biosynthesis; thiamine diphosphate biosynthesis. Its function is as follows. Catalyzes the synthesis of the hydroxymethylpyrimidine phosphate (HMP-P) moiety of thiamine from aminoimidazole ribotide (AIR) in a radical S-adenosyl-L-methionine (SAM)-dependent reaction. The polypeptide is Phosphomethylpyrimidine synthase (Parasynechococcus marenigrum (strain WH8102)).